The primary structure comprises 370 residues: DNA primase large subunit PriL (370 aa).

4 residues coordinate [4Fe-4S] cluster: Cys268, Cys341, Cys350, and Cys354.

Belongs to the eukaryotic-type primase large subunit family. As to quaternary structure, heterodimer of a small subunit (PriS) and a large subunit (PriL). The cofactor is [4Fe-4S] cluster.

Its function is as follows. Regulatory subunit of DNA primase, an RNA polymerase that catalyzes the synthesis of short RNA molecules used as primers for DNA polymerase during DNA replication. Stabilizes and modulates the activity of the small subunit, increasing the rate of DNA synthesis, and conferring RNA synthesis capability. The DNA polymerase activity may enable DNA primase to also catalyze primer extension after primer synthesis. May also play a role in DNA repair. The polypeptide is DNA primase large subunit PriL (Archaeoglobus fulgidus (strain ATCC 49558 / DSM 4304 / JCM 9628 / NBRC 100126 / VC-16)).